The sequence spans 185 residues: Elongation factor P (185 aa).

The protein belongs to the elongation factor P family.

Its subcellular location is the cytoplasm. Its pathway is protein biosynthesis; polypeptide chain elongation. Involved in peptide bond synthesis. Stimulates efficient translation and peptide-bond synthesis on native or reconstituted 70S ribosomes in vitro. Probably functions indirectly by altering the affinity of the ribosome for aminoacyl-tRNA, thus increasing their reactivity as acceptors for peptidyl transferase. The polypeptide is Elongation factor P (Staphylococcus carnosus (strain TM300)).